We begin with the raw amino-acid sequence, 214 residues long: Leucyl/phenylalanyl-tRNA--protein transferase (214 aa).

The protein belongs to the L/F-transferase family.

It is found in the cytoplasm. It carries out the reaction N-terminal L-lysyl-[protein] + L-leucyl-tRNA(Leu) = N-terminal L-leucyl-L-lysyl-[protein] + tRNA(Leu) + H(+). It catalyses the reaction N-terminal L-arginyl-[protein] + L-leucyl-tRNA(Leu) = N-terminal L-leucyl-L-arginyl-[protein] + tRNA(Leu) + H(+). The catalysed reaction is L-phenylalanyl-tRNA(Phe) + an N-terminal L-alpha-aminoacyl-[protein] = an N-terminal L-phenylalanyl-L-alpha-aminoacyl-[protein] + tRNA(Phe). Functions in the N-end rule pathway of protein degradation where it conjugates Leu, Phe and, less efficiently, Met from aminoacyl-tRNAs to the N-termini of proteins containing an N-terminal arginine or lysine. The polypeptide is Leucyl/phenylalanyl-tRNA--protein transferase (Cereibacter sphaeroides (strain ATCC 17029 / ATH 2.4.9) (Rhodobacter sphaeroides)).